A 142-amino-acid polypeptide reads, in one-letter code: Large ribosomal subunit protein uL13 (142 aa).

This sequence belongs to the universal ribosomal protein uL13 family. As to quaternary structure, part of the 50S ribosomal subunit.

Functionally, this protein is one of the early assembly proteins of the 50S ribosomal subunit, although it is not seen to bind rRNA by itself. It is important during the early stages of 50S assembly. The polypeptide is Large ribosomal subunit protein uL13 (Francisella tularensis subsp. mediasiatica (strain FSC147)).